A 35-amino-acid chain; its full sequence is Pheromone-binding protein 1 (35 aa).

This sequence belongs to the PBP/GOBP family. Homodimer. In terms of tissue distribution, antenna.

Functionally, this major soluble protein in olfactory sensilla of male moths might serve to solubilize the extremely hydrophobic pheromone molecules and to transport pheromone through the aqueous lymph to receptors located on olfactory cilia. The chain is Pheromone-binding protein 1 from Lymantria dispar (Gypsy moth).